A 487-amino-acid chain; its full sequence is Betaine aldehyde dehydrogenase (487 aa).

K(+) contacts are provided by Ile27 and Asp93. 149–151 (GAW) contributes to the NAD(+) binding site. The Charge relay system role is filled by Lys161. NAD(+) is bound by residues 175 to 178 (KPSE) and 228 to 231 (SVPT). A K(+)-binding site is contributed by Leu243. Glu249 functions as the Proton acceptor in the catalytic mechanism. Residues Gly251, Cys283, and Glu384 each contribute to the NAD(+) site. Cys283 serves as the catalytic Nucleophile. Cys283 bears the Cysteine sulfenic acid (-SOH) mark. Lys454 and Gly457 together coordinate K(+). The active-site Charge relay system is Glu461.

Belongs to the aldehyde dehydrogenase family. In terms of assembly, dimer of dimers. K(+) is required as a cofactor.

It catalyses the reaction betaine aldehyde + NAD(+) + H2O = glycine betaine + NADH + 2 H(+). It participates in amine and polyamine biosynthesis; betaine biosynthesis via choline pathway; betaine from betaine aldehyde: step 1/1. Functionally, involved in the biosynthesis of the osmoprotectant glycine betaine. Catalyzes the irreversible oxidation of betaine aldehyde to the corresponding acid. The protein is Betaine aldehyde dehydrogenase of Brucella abortus (strain S19).